A 239-amino-acid polypeptide reads, in one-letter code: Ribonuclease 3 (239 aa).

The 126-residue stretch at 12–137 (RAKLESLIGH…LIAAIYLDGG (126 aa)) folds into the RNase III domain. Glutamate 50 lines the Mg(2+) pocket. The active site involves aspartate 54. 2 residues coordinate Mg(2+): aspartate 123 and glutamate 126. The active site involves glutamate 126. The DRBM domain maps to 162-231 (DAKTELQEWS…ATKMLEREGI (70 aa)).

This sequence belongs to the ribonuclease III family. In terms of assembly, homodimer. The cofactor is Mg(2+).

It is found in the cytoplasm. The catalysed reaction is Endonucleolytic cleavage to 5'-phosphomonoester.. Functionally, digests double-stranded RNA. Involved in the processing of primary rRNA transcript to yield the immediate precursors to the large and small rRNAs (23S and 16S). Processes some mRNAs, and tRNAs when they are encoded in the rRNA operon. Processes pre-crRNA and tracrRNA of type II CRISPR loci if present in the organism. The chain is Ribonuclease 3 from Rhizobium etli (strain CIAT 652).